Here is a 368-residue protein sequence, read N- to C-terminus: DnaJ homolog subfamily C member 25 (368 aa).

A helical membrane pass occupies residues 25–47; sequence MQPRLFVLVALSVLLLSGRAGAL. Positions 57-132 constitute a J domain; the sequence is VCYDVLGVSR…ETRKDYDYML (76 aa). The next 2 membrane-spanning stretches (helical) occupy residues 158–178 and 252–272; these read IVIL…WWSS and ILLF…SWYV.

This sequence belongs to the DNAJC25 family.

It is found in the membrane. This chain is DnaJ homolog subfamily C member 25 (dnajc25), found in Xenopus tropicalis (Western clawed frog).